The chain runs to 362 residues: 2-oxoglutarate-dependent dioxygenase lolO2 (362 aa).

A Fe2OG dioxygenase domain is found at 199-312 (TWNYFLGQPV…RYSLVFFGHL (114 aa)). 3 residues coordinate Fe cation: H222, D224, and H280. A 2-oxoglutarate-binding site is contributed by R303.

The protein belongs to the iron/ascorbate-dependent oxidoreductase family. Fe(2+) serves as cofactor.

It functions in the pathway alkaloid biosynthesis. 2-oxoglutarate-dependent dioxygenase; part of the gene cluster that mediates the biosynthesis of loline alkaloids, potent insecticidal agents composed of a pyrrolizidine ring system and an uncommon ether bridge linking carbons 2 and 7. Lolines are structurally differentiated by the various modifications of the L-amino group and include norloline, loline, N-methylloline, N-acetylloline, N-acetylnorloline, and N-formylloline. The first committed step is the condensation of O-acetyl-L-homoserine (derived from L-aspartic acid) and L-proline, probably catalyzed by the gamma-type pyridoxal 5'-phosphate(PLP)-dependent enzyme lolC, to give the diamino diacid, NACPP. Ensuing cyclization, decarboxylation, and acetylation steps yield 1-exo-acetamidopyrrolizidine (AcAP). LolO is required for installation of the ether bridge upon the pathway intermediate, 1-exo-acetamidopyrrolizidine (AcAP). In sequential 2-oxoglutarate- and O(2)-consuming steps, lolO removes hydrogens from C2 and C7 of AcAP to form both carbon-oxygen bonds in N-acetylnorloline (NANL), the precursor to all other lolines. The enzymes lolD, lolE, lolF and lolT have also been proposed to be involved in the ether-bridge installation. Further processing of the exocyclic moiety of NANL by fungal N-acetamidase (LolN), methyltransferase (LolM), and cytochrome P450 (LolP) enzymes, with occasional involvement of a plant acetyltransferase, generates the other known lolines. LolN transforms NANL to norlonine which is monomethylated and dimethylated to respectively lonine and N-methyllonine (NML) by lolM. LolP catalyzes hydroxylation of the methyl group in N-methylloline (NML) and further oxygenation to N-formylloline (NFL). A plant acetyltransferase is responsible for the acetylation of loline to form N-acetylloline (NAL). LolA might interact with aspartate kinase to prevent feedback inhibition of its activity by these end products and thereby promote production of L-homoserine from L-aspartate. The chain is 2-oxoglutarate-dependent dioxygenase lolO2 from Epichloe uncinata (Endophyte fungus).